A 360-amino-acid chain; its full sequence is GTPase Obg (360 aa).

The Obg domain occupies 1 to 156 (MFVDSVEIII…KCVRLELKLI (156 aa)). In terms of domain architecture, OBG-type G spans 157–360 (ADIGLVGFPN…LKFVLLKALQ (204 aa)). Residues 163-170 (GFPNAGKS), 188-192 (FTTLV), 210-213 (DIPG), 279-282 (NKCD), and 341-343 (SAV) each bind GTP. Mg(2+) contacts are provided by S170 and T190.

This sequence belongs to the TRAFAC class OBG-HflX-like GTPase superfamily. OBG GTPase family. In terms of assembly, monomer. The cofactor is Mg(2+).

The protein localises to the cytoplasm. Its function is as follows. An essential GTPase which binds GTP, GDP and possibly (p)ppGpp with moderate affinity, with high nucleotide exchange rates and a fairly low GTP hydrolysis rate. Plays a role in control of the cell cycle, stress response, ribosome biogenesis and in those bacteria that undergo differentiation, in morphogenesis control. The protein is GTPase Obg of Helicobacter pylori (strain J99 / ATCC 700824) (Campylobacter pylori J99).